An 817-amino-acid chain; its full sequence is DNA replication licensing factor Mcm6 (817 aa).

A C4-type zinc finger spans residues C152–C179. Residues L338 to I544 form the MCM domain. S391, T392, A393, K394, S395, and N496 together coordinate ATP. The Arginine finger motif lies at S520–D523. 2 residues coordinate ADP: R611 and E614.

This sequence belongs to the MCM family. As to quaternary structure, component of the Mcm2-7 complex. The complex forms a toroidal hexameric ring with the proposed subunit order Mcm2-Mcm6-Mcm4-Mcm7-Mcm3-Mcm5. The heterodimers of Mcm4/Mcm6 and Mcm3/Mcm5 interact with Mcm2 and Mcm7. In terms of tissue distribution, in stage 12 embryos, strongly expressed in the CNS and weakly in the gut.

Its subcellular location is the nucleus. The catalysed reaction is ATP + H2O = ADP + phosphate + H(+). Acts as a component of the Mcm2-7 complex (Mcm complex) which is the putative replicative helicase essential for 'once per cell cycle' DNA replication initiation and elongation in eukaryotic cells. Core component of CDC45-MCM-GINS (CMG) helicase, the molecular machine that unwinds template DNA during replication, and around which the replisome is built. The active ATPase sites in the Mcm2-7 ring are formed through the interaction surfaces of two neighboring subunits such that a critical structure of a conserved arginine finger motif is provided in trans relative to the ATP-binding site of the Walker A box of the adjacent subunit. The six ATPase active sites, however, are likely to contribute differentially to the complex helicase activity Required for DNA replication and cell proliferation. Required for mitotic cycles, endocycles, and the special S phase associated with the amplification of chorion genes; has a role in origin unwinding or fork elongation at chorion loci. This Drosophila melanogaster (Fruit fly) protein is DNA replication licensing factor Mcm6.